The sequence spans 134 residues: Large ribosomal subunit protein bL20 (134 aa).

It belongs to the bacterial ribosomal protein bL20 family.

In terms of biological role, binds directly to 23S ribosomal RNA and is necessary for the in vitro assembly process of the 50S ribosomal subunit. It is not involved in the protein synthesizing functions of that subunit. The chain is Large ribosomal subunit protein bL20 from Brucella abortus (strain S19).